We begin with the raw amino-acid sequence, 112 residues long: Transcriptional regulator WhiD (112 aa).

In terms of domain architecture, 4Fe-4S Wbl-type spans 22–86 (ACRGVDSSLF…GGLTEDEREE (65 aa)). Cys23, Cys53, Cys56, and Cys62 together coordinate [4Fe-4S] cluster.

This sequence belongs to the WhiB family. As to quaternary structure, the 4Fe-4S form is a monomer; upon oxidation forms a disulfide-bonded homodimer. It depends on [4Fe-4S] cluster as a cofactor. Post-translationally, can be nitrosylated by NO, 8 NO react per cluster. These complexes are quite stable under anaerobic conditions, but degrade slowly aerobically. In terms of processing, upon Fe-S cluster removal intramolecular disulfide bonds are formed.

Its subcellular location is the cytoplasm. Acts as a transcriptional regulator. Probably redox-responsive. The apo- but not holo-form probably binds DNA. Plays a positive role in prespore maturation and the initiation of sporulation septation. This is Transcriptional regulator WhiD (whiD) from Streptomyces coelicolor (strain ATCC BAA-471 / A3(2) / M145).